We begin with the raw amino-acid sequence, 116 residues long: Mercuric transport protein MerT (116 aa).

The next 2 helical transmembrane spans lie at 16-36 (LAAI…ALGF) and 46-66 (VLEP…FFAW). Hg(2+) is bound by residues Cys-24 and Cys-25. Residues Cys-76 and Cys-82 each coordinate Hg(2+). Residues 94-114 (IFWFVAVLVLVALGFPYVMPF) form a helical membrane-spanning segment.

This sequence belongs to the MerT family.

It localises to the cell inner membrane. Functionally, involved in mercury resistance. Probably transfers a mercuric ion from the periplasmic Hg(2+)-binding protein MerP to the cytoplasmic mercuric reductase MerA. The polypeptide is Mercuric transport protein MerT (Acinetobacter calcoaceticus).